The sequence spans 340 residues: tRNA N6-adenosine threonylcarbamoyltransferase (340 aa).

2 residues coordinate Fe cation: His113 and His117. Substrate is bound by residues 135–139, Asp169, Gly182, Asp186, and Asn274; that span reads LVSGG. Asp302 contacts Fe cation.

It belongs to the KAE1 / TsaD family. The cofactor is Fe(2+).

It is found in the cytoplasm. The enzyme catalyses L-threonylcarbamoyladenylate + adenosine(37) in tRNA = N(6)-L-threonylcarbamoyladenosine(37) in tRNA + AMP + H(+). Required for the formation of a threonylcarbamoyl group on adenosine at position 37 (t(6)A37) in tRNAs that read codons beginning with adenine. Is involved in the transfer of the threonylcarbamoyl moiety of threonylcarbamoyl-AMP (TC-AMP) to the N6 group of A37, together with TsaE and TsaB. TsaD likely plays a direct catalytic role in this reaction. The polypeptide is tRNA N6-adenosine threonylcarbamoyltransferase (Mycobacterium sp. (strain KMS)).